A 381-amino-acid polypeptide reads, in one-letter code: 1-deoxy-D-xylulose 5-phosphate reductoisomerase (381 aa).

NADPH-binding residues include glycine 13, serine 14, isoleucine 15, asparagine 40, and asparagine 114. Position 115 (lysine 115) interacts with 1-deoxy-D-xylulose 5-phosphate. Glutamate 116 is an NADPH binding site. A Mn(2+)-binding site is contributed by aspartate 140. Residues serine 141, glutamate 142, serine 166, and histidine 189 each contribute to the 1-deoxy-D-xylulose 5-phosphate site. Glutamate 142 provides a ligand contact to Mn(2+). An NADPH-binding site is contributed by glycine 195. Positions 202, 207, 208, and 211 each coordinate 1-deoxy-D-xylulose 5-phosphate. Glutamate 211 is a binding site for Mn(2+).

It belongs to the DXR family. It depends on Mg(2+) as a cofactor. Mn(2+) is required as a cofactor.

The catalysed reaction is 2-C-methyl-D-erythritol 4-phosphate + NADP(+) = 1-deoxy-D-xylulose 5-phosphate + NADPH + H(+). It participates in isoprenoid biosynthesis; isopentenyl diphosphate biosynthesis via DXP pathway; isopentenyl diphosphate from 1-deoxy-D-xylulose 5-phosphate: step 1/6. Functionally, catalyzes the NADPH-dependent rearrangement and reduction of 1-deoxy-D-xylulose-5-phosphate (DXP) to 2-C-methyl-D-erythritol 4-phosphate (MEP). This chain is 1-deoxy-D-xylulose 5-phosphate reductoisomerase, found in Treponema denticola (strain ATCC 35405 / DSM 14222 / CIP 103919 / JCM 8153 / KCTC 15104).